A 424-amino-acid chain; its full sequence is 3-phosphoshikimate 1-carboxyvinyltransferase (424 aa).

3 residues coordinate 3-phosphoshikimate: Lys21, Ser22, and Arg26. Lys21 contacts phosphoenolpyruvate. Phosphoenolpyruvate-binding residues include Gly92 and Arg120. Residues Ser163, Ser164, Gln165, Ser191, Asp306, and Lys333 each coordinate 3-phosphoshikimate. Position 165 (Gln165) interacts with phosphoenolpyruvate. Asp306 functions as the Proton acceptor in the catalytic mechanism. Arg337, Arg379, and Lys405 together coordinate phosphoenolpyruvate.

This sequence belongs to the EPSP synthase family. In terms of assembly, monomer.

It localises to the cytoplasm. It catalyses the reaction 3-phosphoshikimate + phosphoenolpyruvate = 5-O-(1-carboxyvinyl)-3-phosphoshikimate + phosphate. It participates in metabolic intermediate biosynthesis; chorismate biosynthesis; chorismate from D-erythrose 4-phosphate and phosphoenolpyruvate: step 6/7. Functionally, catalyzes the transfer of the enolpyruvyl moiety of phosphoenolpyruvate (PEP) to the 5-hydroxyl of shikimate-3-phosphate (S3P) to produce enolpyruvyl shikimate-3-phosphate and inorganic phosphate. This Clostridium perfringens (strain SM101 / Type A) protein is 3-phosphoshikimate 1-carboxyvinyltransferase.